Consider the following 261-residue polypeptide: [LysW]-aminoadipate/[LysW]-glutamate kinase (261 aa).

Substrate is bound by residues 35–36 (GG), arginine 62, and asparagine 166.

Belongs to the acetylglutamate kinase family. LysZ subfamily.

Its subcellular location is the cytoplasm. The catalysed reaction is [amino-group carrier protein]-C-terminal-N-(1,4-dicarboxybutan-1-yl)-L-glutamine + ATP = [amino-group carrier protein]-C-terminal-N-(1-carboxy-5-phosphooxy-5-oxopentan-1-yl)-L-glutamine + ADP. It carries out the reaction [amino-group carrier protein]-C-terminal-gamma-(L-glutamyl)-L-glutamate + ATP = [amino-group carrier protein]-C-terminal-gamma-(5-phospho-L-glutamyl)-L-glutamate + ADP. The protein operates within amino-acid biosynthesis; L-lysine biosynthesis via AAA pathway; L-lysine from L-alpha-aminoadipate (Thermus route): step 2/5. Its pathway is amino-acid biosynthesis; L-arginine biosynthesis. In terms of biological role, involved in both the arginine and lysine biosynthetic pathways. Phosphorylates the LysW-bound precursors glutamate (for arginine biosynthesis), respectively alpha-aminoadipate (for lysine biosynthesis). The chain is [LysW]-aminoadipate/[LysW]-glutamate kinase from Sulfolobus acidocaldarius (strain ATCC 33909 / DSM 639 / JCM 8929 / NBRC 15157 / NCIMB 11770).